The following is a 74-amino-acid chain: RNA-binding protein Hfq (74 aa).

One can recognise a Sm domain in the interval 9 to 69 (DQFLNQLRKE…ISTFAPQKNV (61 aa)).

Belongs to the Hfq family. In terms of assembly, homohexamer.

RNA chaperone that binds small regulatory RNA (sRNAs) and mRNAs to facilitate mRNA translational regulation in response to envelope stress, environmental stress and changes in metabolite concentrations. Also binds with high specificity to tRNAs. This Anoxybacillus flavithermus (strain DSM 21510 / WK1) protein is RNA-binding protein Hfq.